A 341-amino-acid chain; its full sequence is S-adenosylmethionine:tRNA ribosyltransferase-isomerase (341 aa).

The protein belongs to the QueA family. Monomer.

It is found in the cytoplasm. The catalysed reaction is 7-aminomethyl-7-carbaguanosine(34) in tRNA + S-adenosyl-L-methionine = epoxyqueuosine(34) in tRNA + adenine + L-methionine + 2 H(+). The protein operates within tRNA modification; tRNA-queuosine biosynthesis. Transfers and isomerizes the ribose moiety from AdoMet to the 7-aminomethyl group of 7-deazaguanine (preQ1-tRNA) to give epoxyqueuosine (oQ-tRNA). This chain is S-adenosylmethionine:tRNA ribosyltransferase-isomerase, found in Chlorobium phaeovibrioides (strain DSM 265 / 1930) (Prosthecochloris vibrioformis (strain DSM 265)).